Reading from the N-terminus, the 135-residue chain is uncharacterized protein (135 aa).

It belongs to the transcriptional regulatory CopG/NikR family.

This is an uncharacterized protein from Methanocaldococcus jannaschii (strain ATCC 43067 / DSM 2661 / JAL-1 / JCM 10045 / NBRC 100440) (Methanococcus jannaschii).